Reading from the N-terminus, the 300-residue chain is Epimerase family protein SACOL0834 (300 aa).

Belongs to the NAD(P)-dependent epimerase/dehydratase family. SDR39U1 subfamily.

The polypeptide is Epimerase family protein SACOL0834 (Staphylococcus aureus (strain COL)).